Here is a 257-residue protein sequence, read N- to C-terminus: Transcription factor MYB4 (257 aa).

HTH myb-type domains lie at 9–61 (KMGL…INYL) and 62–116 (RPDI…KKRL). 2 consecutive DNA-binding regions (H-T-H motif) follow at residues 37–61 (WRAL…INYL) and 89–112 (WSAI…HTHL). A disordered region spans residues 115–179 (RLDAPAQGGH…VAEEHGNAGI (65 aa)). The segment covering 130-140 (GKKHKKPKSAK) has biased composition (basic residues). A compositionally biased stretch (low complexity) spans 141 to 170 (KPAAAAAAPPASPERSASSSVTESSMASSV).

It is found in the nucleus. Functionally, transcriptional activator involved in cold stress response. Regulates positively the expression of genes involved in reactive oxygen species (ROS) scavenging such as peroxidase and superoxide dismutase during cold stress. Transactivates a complex gene network that have major effects on stress tolerance and panicle development. The chain is Transcription factor MYB4 from Oryza sativa subsp. japonica (Rice).